The chain runs to 78 residues: Large ribosomal subunit protein bL28 (78 aa).

The tract at residues 1–31 (MAAHCQVTGAEPGFGHSISHSHRRNKRRFDP) is disordered.

The protein belongs to the bacterial ribosomal protein bL28 family.

The polypeptide is Large ribosomal subunit protein bL28 (Arthrobacter sp. (strain FB24)).